A 341-amino-acid chain; its full sequence is 4-hydroxy-2-oxovalerate aldolase (341 aa).

A Pyruvate carboxyltransferase domain is found at 9-259 (VRITEVCLRD…KLDIDLYKMM (251 aa)). 17 to 18 (RD) is a substrate binding site. Residue aspartate 18 coordinates Mn(2+). The active-site Proton acceptor is histidine 21. 2 residues coordinate substrate: serine 171 and histidine 198. Residues histidine 198 and histidine 200 each coordinate Mn(2+). Tyrosine 289 lines the substrate pocket.

This sequence belongs to the 4-hydroxy-2-oxovalerate aldolase family.

The enzyme catalyses (S)-4-hydroxy-2-oxopentanoate = acetaldehyde + pyruvate. This Bacillus cereus (strain ATCC 10987 / NRS 248) protein is 4-hydroxy-2-oxovalerate aldolase.